The sequence spans 150 residues: Arginine repressor (150 aa).

The protein belongs to the ArgR family.

It localises to the cytoplasm. Its pathway is amino-acid biosynthesis; L-arginine biosynthesis [regulation]. Its function is as follows. Regulates arginine biosynthesis genes. The protein is Arginine repressor of Carboxydothermus hydrogenoformans (strain ATCC BAA-161 / DSM 6008 / Z-2901).